A 227-amino-acid chain; its full sequence is PKHD-type hydroxylase BPSS1206 (227 aa).

Residues 78–178 form the Fe2OG dioxygenase domain; sequence KVFPPLFNRY…RVASFFWIQS (101 aa). 3 residues coordinate Fe cation: H96, D98, and H159. R169 provides a ligand contact to 2-oxoglutarate.

Fe(2+) is required as a cofactor. It depends on L-ascorbate as a cofactor.

This is PKHD-type hydroxylase BPSS1206 from Burkholderia pseudomallei (strain K96243).